Consider the following 287-residue polypeptide: 4-hydroxybenzoate octaprenyltransferase (287 aa).

8 helical membrane-spanning segments follow: residues 19–39 (IGSLLLLWPTLWALFLAADGL), 42–62 (WHVLIVFVLGVVFMRSAGCVI), 95–115 (FFAVLVVCSFLLVLTMNTLTI), 136–156 (YLPQFVLGLAFSWAIPMAYAA), 166–186 (WLLFVINALWTIAYDTQYAMV), 210–230 (IIGLLQLSVLALLIVLGSQLA), 233–253 (GIYYWGILAAAGFFVYQQWLI), and 264–284 (AFLNNNYVGGLIFIAISASVL).

Belongs to the UbiA prenyltransferase family. Mg(2+) is required as a cofactor.

The protein localises to the cell inner membrane. It carries out the reaction all-trans-octaprenyl diphosphate + 4-hydroxybenzoate = 4-hydroxy-3-(all-trans-octaprenyl)benzoate + diphosphate. Its pathway is cofactor biosynthesis; ubiquinone biosynthesis. In terms of biological role, catalyzes the prenylation of para-hydroxybenzoate (PHB) with an all-trans polyprenyl group. Mediates the second step in the final reaction sequence of ubiquinone-8 (UQ-8) biosynthesis, which is the condensation of the polyisoprenoid side chain with PHB, generating the first membrane-bound Q intermediate 3-octaprenyl-4-hydroxybenzoate. This chain is 4-hydroxybenzoate octaprenyltransferase, found in Aliivibrio fischeri (strain MJ11) (Vibrio fischeri).